The following is a 445-amino-acid chain: Tubulin beta-4B chain (445 aa).

The MREI motif motif lies at 1-4 (MREI). Gln-11 contributes to the GTP binding site. The residue at position 55 (Thr-55) is a Phosphothreonine. Lys-58 bears the N6-acetyllysine mark. GTP is bound by residues Glu-69, Ser-138, Gly-142, Thr-143, and Gly-144. Glu-69 provides a ligand contact to Mg(2+). A Phosphoserine; by CDK1 modification is found at Ser-172. The GTP site is built by Asn-204 and Asn-226. The interval 426–445 (QDATAEEEGEFEEEAEEEVA) is disordered. The segment covering 429-445 (TAEEEGEFEEEAEEEVA) has biased composition (acidic residues). Glu-438 is modified (5-glutamyl polyglutamate).

It belongs to the tubulin family. In terms of assembly, dimer of alpha and beta chains. A typical microtubule is a hollow water-filled tube with an outer diameter of 25 nm and an inner diameter of 15 nM. Alpha-beta heterodimers associate head-to-tail to form protofilaments running lengthwise along the microtubule wall with the beta-tubulin subunit facing the microtubule plus end conferring a structural polarity. Microtubules usually have 13 protofilaments but different protofilament numbers can be found in some organisms and specialized cells. Component of sperm flagellar doublet microtubules. It depends on Mg(2+) as a cofactor. Some glutamate residues at the C-terminus are polyglycylated, resulting in polyglycine chains on the gamma-carboxyl group. Glycylation is mainly limited to tubulin incorporated into axonemes (cilia and flagella) whereas glutamylation is prevalent in neuronal cells, centrioles, axonemes, and the mitotic spindle. Both modifications can coexist on the same protein on adjacent residues, and lowering polyglycylation levels increases polyglutamylation, and reciprocally. Cilia and flagella glycylation is required for their stability and maintenance. Flagella glycylation controls sperm motility. Post-translationally, some glutamate residues at the C-terminus are polyglutamylated, resulting in polyglutamate chains on the gamma-carboxyl group. Polyglutamylation plays a key role in microtubule severing by spastin (SPAST). SPAST preferentially recognizes and acts on microtubules decorated with short polyglutamate tails: severing activity by SPAST increases as the number of glutamates per tubulin rises from one to eight, but decreases beyond this glutamylation threshold. Glutamylation is also involved in cilia motility. In terms of processing, phosphorylated on Ser-172 by CDK1 during the cell cycle, from metaphase to telophase, but not in interphase. This phosphorylation inhibits tubulin incorporation into microtubules.

It is found in the cytoplasm. The protein localises to the cytoskeleton. It localises to the flagellum axoneme. Tubulin is the major constituent of microtubules, a cylinder consisting of laterally associated linear protofilaments composed of alpha- and beta-tubulin heterodimers. Microtubules grow by the addition of GTP-tubulin dimers to the microtubule end, where a stabilizing cap forms. Below the cap, tubulin dimers are in GDP-bound state, owing to GTPase activity of alpha-tubulin. In Bos taurus (Bovine), this protein is Tubulin beta-4B chain (TUBB4B).